The sequence spans 396 residues: Chalcone synthase (396 aa).

The active site involves Cys-167.

The protein belongs to the thiolase-like superfamily. Chalcone/stilbene synthases family.

It catalyses the reaction (E)-4-coumaroyl-CoA + 3 malonyl-CoA + 3 H(+) = 2',4,4',6'-tetrahydroxychalcone + 3 CO2 + 4 CoA. The protein operates within secondary metabolite biosynthesis; flavonoid biosynthesis. Its function is as follows. The primary product of this enzyme is 4,2',4',6'-tetrahydroxychalcone (also termed naringenin-chalcone or chalcone) which can under specific conditions spontaneously isomerize into naringenin. This chain is Chalcone synthase (CHS), found in Chrysosplenium americanum (American golden saxifrage).